Consider the following 656-residue polypeptide: Rab proteins geranylgeranyltransferase component A 2 (656 aa).

Disordered regions lie at residues 188 to 209 (MHTVSDKDGDKDESKSTVEDKA) and 609 to 656 (PPPN…HLQN). The span at 639-656 (ESSEESKNLESPEKHLQN) shows a compositional bias: basic and acidic residues. At serine 649 the chain carries Phosphoserine.

This sequence belongs to the Rab GDI family. In terms of assembly, monomer. Heterotrimer composed of RABGGTA, RABGGTB and CHML; within this trimer, RABGGTA and RABGGTB form the catalytic component B, while CHML (component A) mediates Rab protein binding. Interacts with RAB1A, RAB7A and RAB27A, but has much lower affinity for RAB1A, RAB7A and RAB27A than CHM. Interacts with the non-phosphorylated forms of RAB3A, RAB3B, RAB3C, RAB3D, RAB5B, RAB5C, RAB8A, RAB8B, RAB10, RAB12, RAB35, and RAB43.

Its subcellular location is the cytoplasm. It localises to the cytosol. Functionally, substrate-binding subunit (component A) of the Rab geranylgeranyltransferase (GGTase) complex. Binds unprenylated Rab proteins and presents the substrate peptide to the catalytic component B. The component A is thought to be regenerated by transferring its prenylated Rab back to the donor membrane. Less effective than CHM in supporting prenylation of Rab3 family. This Homo sapiens (Human) protein is Rab proteins geranylgeranyltransferase component A 2 (CHML).